The primary structure comprises 90 residues: U-scoloptoxin(15)-Sa3a (90 aa).

A signal peptide spans 1-18; the sequence is MKMVYLGLFLIITSCVIS.

It belongs to the scoloptoxin-15 family. Post-translationally, contains 3 disulfide bonds. Expressed by the venom gland.

The protein localises to the secreted. This chain is U-scoloptoxin(15)-Sa3a, found in Scolopendra alternans (Florida Keys giant centipede).